A 286-amino-acid chain; its full sequence is Pantothenate synthetase (286 aa).

30-37 (MGNLHAGH) is a binding site for ATP. The active-site Proton donor is the His-37. Gln-61 contributes to the (R)-pantoate binding site. Residue Gln-61 participates in beta-alanine binding. Residue 149–152 (GEKD) participates in ATP binding. Gln-155 is a (R)-pantoate binding site. Residues Val-178 and 186-189 (MSSR) each bind ATP.

Belongs to the pantothenate synthetase family. Homodimer.

It localises to the cytoplasm. It carries out the reaction (R)-pantoate + beta-alanine + ATP = (R)-pantothenate + AMP + diphosphate + H(+). Its pathway is cofactor biosynthesis; (R)-pantothenate biosynthesis; (R)-pantothenate from (R)-pantoate and beta-alanine: step 1/1. Catalyzes the condensation of pantoate with beta-alanine in an ATP-dependent reaction via a pantoyl-adenylate intermediate. The sequence is that of Pantothenate synthetase from Methylococcus capsulatus (strain ATCC 33009 / NCIMB 11132 / Bath).